The primary structure comprises 172 residues: Large ribosomal subunit protein uL10 (172 aa).

This sequence belongs to the universal ribosomal protein uL10 family. As to quaternary structure, part of the ribosomal stalk of the 50S ribosomal subunit. The N-terminus interacts with L11 and the large rRNA to form the base of the stalk. The C-terminus forms an elongated spine to which L12 dimers bind in a sequential fashion forming a multimeric L10(L12)X complex.

Functionally, forms part of the ribosomal stalk, playing a central role in the interaction of the ribosome with GTP-bound translation factors. This chain is Large ribosomal subunit protein uL10, found in Chlorobium chlorochromatii (strain CaD3).